We begin with the raw amino-acid sequence, 1144 residues long: Type II inositol polyphosphate 5-phosphatase 14 (1144 aa).

Disordered regions lie at residues 15–67 and 81–118; these read ASLV…FDSS and GRTS…DDIE. WD repeat units follow at residues 158-196, 216-255, 269-307, 445-483, and 524-561; these read ETQT…EVGC, VPTS…TTTA, AHRG…KSLV, EDTR…LREV, and SHNE…PLDS. Catalytic stretches follow at residues 791–807 and 870–885; these read DLVA…FGIT and KKRI…YRDN. Lys949 participates in a covalent cross-link: Glycyl lysine isopeptide (Lys-Gly) (interchain with G-Cter in ubiquitin). Residues 1111-1131 are compositionally biased toward polar residues; the sequence is TTMTKNLEGSTRYQTDANRGG. The segment at 1111 to 1144 is disordered; sequence TTMTKNLEGSTRYQTDANRGGSTRHRTDDSTRRG. The segment covering 1135–1144 has biased composition (basic and acidic residues); that stretch reads HRTDDSTRRG.

The protein belongs to the inositol polyphosphate 5-phosphatase family. Requires Mg(2+) as cofactor. In terms of tissue distribution, expressed in young seedlings and flowers.

It carries out the reaction a 1,2-diacyl-sn-glycero-3-phospho-(1D-myo-inositol-4,5-bisphosphate) + H2O = a 1,2-diacyl-sn-glycero-3-phospho-(1D-myo-inositol 4-phosphate) + phosphate. The enzyme catalyses a 1,2-diacyl-sn-glycero-3-phospho-(1D-myo-inositol-3,4,5-trisphosphate) + H2O = a 1,2-diacyl-sn-glycero-3-phospho-(1D-myo-inositol-3,4-bisphosphate) + phosphate. The catalysed reaction is 1D-myo-inositol 1,4,5-trisphosphate + H2O = 1D-myo-inositol 1,4-bisphosphate + phosphate. In terms of biological role, has phosphatase activity toward PtdIns(4,5)P2, PtdIns(3,4,5)P3 and Ins(1,4,5)P3. This chain is Type II inositol polyphosphate 5-phosphatase 14, found in Arabidopsis thaliana (Mouse-ear cress).